We begin with the raw amino-acid sequence, 511 residues long: Ribonuclease Y (511 aa).

A helical membrane pass occupies residues 2 to 22 (ITTVIIAIVCFAVGGGLSYML). The KH domain occupies 201–261 (SVTVFHIESD…VRREIARLAL (61 aa)). The 94-residue stretch at 327-420 (LLQHARETAN…VQVCDAISGA (94 aa)) folds into the HD domain.

It belongs to the RNase Y family.

Its subcellular location is the cell membrane. Its function is as follows. Endoribonuclease that initiates mRNA decay. The protein is Ribonuclease Y of Phocaeicola vulgatus (strain ATCC 8482 / DSM 1447 / JCM 5826 / CCUG 4940 / NBRC 14291 / NCTC 11154) (Bacteroides vulgatus).